The chain runs to 382 residues: Putative acetyl-CoA C-acetyltransferase VraB (382 aa).

The Acyl-thioester intermediate role is filled by C86. H338 acts as the Proton acceptor in catalysis.

The protein belongs to the thiolase-like superfamily. Thiolase family.

The chain is Putative acetyl-CoA C-acetyltransferase VraB (vraB) from Staphylococcus epidermidis (strain ATCC 12228 / FDA PCI 1200).